We begin with the raw amino-acid sequence, 511 residues long: Centrosomal protein CCDC61 (511 aa).

Met1 bears the N-acetylmethionine mark. The segment at Met1 to Pro143 is head domain. Coiled-coil stretches lie at residues Ile176–Glu203 and Ser246–Glu273. Thr283 is modified (phosphothreonine). 2 disordered regions span residues Leu284 to Arg413 and Ser429 to Val476. Over residues Arg290 to Thr302 the composition is skewed to basic and acidic residues. A phosphoserine mark is found at Ser330 and Ser332. Residues Lys360–Met369 show a composition bias toward low complexity. Phosphoserine is present on residues Ser371 and Ser374. Residues Ser433 to Gly442 are compositionally biased toward basic residues. Ser446 carries the post-translational modification Phosphoserine. The span at Pro449–Thr458 shows a compositional bias: polar residues. Ser472 carries the post-translational modification Phosphoserine.

It belongs to the CCDC61 family. In terms of assembly, forms homodimers (via head domain). Interacts with CEP170. Interacts with PCM1 and CEP131. Binds tubulin.

It localises to the cytoplasm. Its subcellular location is the cytoskeleton. It is found in the microtubule organizing center. The protein resides in the centrosome. The protein localises to the centriolar satellite. It localises to the cilium basal body. Microtubule-binding centrosomal protein required for centriole cohesion, independently of the centrosome-associated protein/CEP250 and rootletin/CROCC linker. In interphase, required for anchoring microtubule at the mother centriole subdistal appendages and for centrosome positioning. During mitosis, may be involved in spindle assembly and chromatin alignment by regulating the organization of spindle microtubules into a symmetrical structure. Plays a non-essential role in ciliogenesis. This Mus musculus (Mouse) protein is Centrosomal protein CCDC61.